The primary structure comprises 91 residues: Small ribosomal subunit protein uS19 (91 aa).

It belongs to the universal ribosomal protein uS19 family.

Functionally, protein S19 forms a complex with S13 that binds strongly to the 16S ribosomal RNA. This is Small ribosomal subunit protein uS19 from Prochlorococcus marinus (strain MIT 9303).